A 306-amino-acid chain; its full sequence is Mitochondrial basic amino acids transporter (306 aa).

The next 6 membrane-spanning stretches (helical) occupy residues 2-22, 61-81, 96-116, 153-172, 187-207, and 255-275; these read ALDF…GHPF, GLGS…GVQG, FLAG…MELA, GMVS…FLTY, LLVP…WLST, and LLRA…VLTY. Solcar repeat units lie at residues 2–86, 90–178, and 190–275; these read ALDF…TLRA, DSPL…LTRA, and PKLL…VLTY. The tract at residues 283-306 is disordered; it reads VDSEAAPGASTTPAGPALAQPSSL. The span at 287–306 shows a compositional bias: low complexity; sequence AAPGASTTPAGPALAQPSSL.

The protein belongs to the mitochondrial carrier (TC 2.A.29) family.

It is found in the mitochondrion inner membrane. It carries out the reaction L-lysine(out) + L-arginine(in) = L-lysine(in) + L-arginine(out). The catalysed reaction is L-histidine(out) + L-arginine(in) = L-histidine(in) + L-arginine(out). The enzyme catalyses L-ornithine(in) + L-arginine(out) = L-ornithine(out) + L-arginine(in). It catalyses the reaction L-homoarginine(in) + L-arginine(out) = L-homoarginine(out) + L-arginine(in). It carries out the reaction N(omega)-methyl-L-arginine(in) + L-arginine(out) = N(omega)-methyl-L-arginine(out) + L-arginine(in). The catalysed reaction is L-arginine(in) = L-arginine(out). The enzyme catalyses L-lysine(in) = L-lysine(out). It catalyses the reaction L-ornithine(in) = L-ornithine(out). It carries out the reaction L-histidine(out) = L-histidine(in). In terms of biological role, mitochondrial transporter of arginine, lysine, homoarginine, methylarginine and, to a much lesser extent, ornithine and histidine. Does not transport carnitine nor acylcarnitines. Functions by both counter-exchange and uniport mechanisms. Plays a physiological role in the import of basic amino acids into mitochondria for mitochondrial protein synthesis and amino acid degradation. The polypeptide is Mitochondrial basic amino acids transporter (Slc25a29) (Rattus norvegicus (Rat)).